The sequence spans 555 residues: Potassium-transporting ATPase potassium-binding subunit (555 aa).

Transmembrane regions (helical) follow at residues 2-22 (IWVAVVITMLLFILVAKPTGI), 60-80 (QYALSLVLLNGFMIVVVYFIF), 130-150 (IGITFLMFAAPATTLALVMAF), 173-193 (VFLPIAFVTALVFVALGVPQT), 246-266 (MSNILQMMLMMLLPTALPFTY), 278-298 (ILFVSLFMVFLLGFITITTSE), 374-394 (AGFVNIITYAIIAVFISGLMV), 412-432 (LIAVTILFHPLLILGFSALAL), 483-503 (LVMFLGRYFSLVTMLAVAASL), and 525-545 (GIFIGTIVIVGALTFFPMLVL).

This sequence belongs to the KdpA family. The system is composed of three essential subunits: KdpA, KdpB and KdpC.

Its subcellular location is the cell membrane. Its function is as follows. Part of the high-affinity ATP-driven potassium transport (or Kdp) system, which catalyzes the hydrolysis of ATP coupled with the electrogenic transport of potassium into the cytoplasm. This subunit binds the extracellular potassium ions and delivers the ions to the membrane domain of KdpB through an intramembrane tunnel. The chain is Potassium-transporting ATPase potassium-binding subunit from Bacillus thuringiensis subsp. konkukian (strain 97-27).